The primary structure comprises 134 residues: Small ribosomal subunit protein uS8 (134 aa).

It belongs to the universal ribosomal protein uS8 family. Part of the 30S ribosomal subunit. Contacts proteins S5 and S12.

In terms of biological role, one of the primary rRNA binding proteins, it binds directly to 16S rRNA central domain where it helps coordinate assembly of the platform of the 30S subunit. This Synechococcus sp. (strain JA-3-3Ab) (Cyanobacteria bacterium Yellowstone A-Prime) protein is Small ribosomal subunit protein uS8.